The following is an 858-amino-acid chain: MAAAAEEGMSAAALVMSVPDSIGRSPESEGVGAGDEEKDAATKGTVAVGDSEEDGEDVFEVERILDMKCEGGKNLYKVRWKGYTSEDDTWEPEVHLEDCKEVLLEFRKKLAENKAKAVRKDIQRLSLNNDIFEADSDSDQQSDTKEDISPRKKKKKIKCKEETSPEDLRKKRTKMGKLKDKFKTELESTSEIIGFDVKTKKRIWEVKEELKDSKKPKKDEIKETKELKKANKRAEVRDLKIKIREDVKENRKTKKERYIESPLESESPNDSLILEDDSEDFISDNREENQNVRSVRDKTAQETVQEGIFEKHLDDLISIEEDAGTRVRRKKTKPRKFEEPKEIKKLESTNAFLERRAIPKKQRNQDKGISNLELNKLPSPVFAQTLKSSRLSGEEKSLKSPDLAEEEKEKKNEPKGKYQKRYDLDKEEKARKEPKVLKSFKEIRNAFDLFKKTTEEKNDVLENNSKREEISLDSKIMNDNKTKDKCSLKEKRNTRDETDTWAYIAAEGDQEVSDSVCQTDETSDGRQPVLSLGMDLQLEWMKLEDFQKHLDGEDEPFITTNRIPNNLLRDAVKNGDYIAVKVALNSNEEYNLDQEDSTGMTLVMLAAAGGQDDLLRLLITKGAKVNGRQKNGTTALIHAAEKNFLTTVAILLEAGAFVNVQQSNGETALMKACKRGNSDIVRLVIECGADCNILSKHQNSALYFAKQCNNVLVYELLKSHLETLSRVAEETIRDYFESRLALLEPVFPIACHRLCEGPDFSTDFNYMPPQNMPEGSGVLLFIFHANFLGKDVIARLCGPCSVQAVVLNDKFQLPVFLDSHFVYSFSPVAGPNKLFIRLTEAPFAKVKLLIGAYRVQLQ.

The interval 18-55 (VPDSIGRSPESEGVGAGDEEKDAATKGTVAVGDSEEDG) is disordered. Residues serine 51, serine 85, serine 136, and serine 138 each carry the phosphoserine modification. Residues 59–118 (FEVERILDMKCEGGKNLYKVRWKGYTSEDDTWEPEVHLEDCKEVLLEFRKKLAENKAKAV) form the Chromo domain. The segment at 80 to 87 (WKGYTSED) is histone H3K9me3 binding. The disordered stretch occupies residues 129–175 (NDIFEADSDSDQQSDTKEDISPRKKKKKIKCKEETSPEDLRKKRTKM). Threonine 144 carries the phosphothreonine modification. 2 positions are modified to phosphoserine; by CDK1: serine 149 and serine 164. Over residues 159–169 (CKEETSPEDLR) the composition is skewed to basic and acidic residues. Serine 188 carries the post-translational modification Phosphoserine. Disordered stretches follow at residues 209-234 (ELKD…NKRA) and 250-300 (NRKT…DKTA). Phosphoserine occurs at positions 267, 271, and 278. The span at 273-282 (ILEDDSEDFI) shows a compositional bias: acidic residues. Over residues 283–300 (SDNREENQNVRSVRDKTA) the composition is skewed to basic and acidic residues. Serine 318 is subject to Phosphoserine. The tract at residues 321 to 431 (EDAGTRVRRK…YDLDKEEKAR (111 aa)) is disordered. Residues 335-357 (RKFEEPKEIKKLESTNAFLERRA) are compositionally biased toward basic and acidic residues. The residue at position 385 (threonine 385) is a Phosphothreonine; by CDK1. Phosphoserine occurs at positions 392 and 400. Residues 407–431 (EKEKKNEPKGKYQKRYDLDKEEKAR) show a composition bias toward basic and acidic residues. Threonine 453 carries the post-translational modification Phosphothreonine. 4 ANK repeats span residues 598-627 (TGMT…KVNG), 631-660 (NGTT…FVNV), 664-693 (NGET…DCNI), and 697-726 (HQNS…TLSR).

In terms of assembly, homodimer. Interacts (via chromo domain) with histone H3K9me3. Has the highest affinity for H3K9me3, and lesser affinity for H3K9me2 and H3K9me1. Component of the HUSH complex; at least composed of TASOR, PPHLN1 and MPHOSPH8. Interacts with DNMT3, EHMT1 and SETDB1. Interacts with MORC2; the interaction associateS MORC2 with the HUSH complex which recruits MORC2 to heterochromatic loci. Interacts with ZNF638; leading to recruitment of the HUSH complex to unintegrated retroviral DNA. Interacts with TASOR. In terms of processing, phosphorylated in M (mitotic) phase. Phosphorylation by CDK1 promotes dissociation from chromatin. As to expression, expressed in the spermatogonia, spermatocytes and granular cells within the cerebellum.

Its subcellular location is the nucleus. The protein localises to the chromosome. Functionally, heterochromatin component that specifically recognizes and binds methylated 'Lys-9' of histone H3 (H3K9me) and promotes recruitment of proteins that mediate epigenetic repression. Mediates recruitment of the HUSH complex to H3K9me3 sites: the HUSH complex is recruited to genomic loci rich in H3K9me3 and is required to maintain transcriptional silencing by promoting recruitment of SETDB1, a histone methyltransferase that mediates further deposition of H3K9me3, as well as MORC2. Binds H3K9me and promotes DNA methylation by recruiting DNMT3A to target CpG sites; these can be situated within the coding region of the gene. Mediates down-regulation of CDH1 expression. Also represses L1 retrotransposons in collaboration with MORC2 and, probably, SETDB1, the silencing is dependent of repressive epigenetic modifications, such as H3K9me3 mark. Silencing events often occur within introns of transcriptionally active genes, and lead to the down-regulation of host gene expression. The HUSH complex is also involved in the silencing of unintegrated retroviral DNA by being recruited by ZNF638: some part of the retroviral DNA formed immediately after infection remains unintegrated in the host genome and is transcriptionally repressed. The sequence is that of M-phase phosphoprotein 8 from Mus musculus (Mouse).